The sequence spans 261 residues: Triosephosphate isomerase (261 aa).

10–12 (NWK) is a substrate binding site. Residue His-100 is the Electrophile of the active site. Glu-172 (proton acceptor) is an active-site residue. Residues Gly-178, Ser-218, and 239–240 (GG) contribute to the substrate site.

This sequence belongs to the triosephosphate isomerase family. As to quaternary structure, homodimer.

It is found in the cytoplasm. The enzyme catalyses D-glyceraldehyde 3-phosphate = dihydroxyacetone phosphate. It participates in carbohydrate biosynthesis; gluconeogenesis. Its pathway is carbohydrate degradation; glycolysis; D-glyceraldehyde 3-phosphate from glycerone phosphate: step 1/1. In terms of biological role, involved in the gluconeogenesis. Catalyzes stereospecifically the conversion of dihydroxyacetone phosphate (DHAP) to D-glyceraldehyde-3-phosphate (G3P). The protein is Triosephosphate isomerase of Mycobacterium sp. (strain JLS).